A 360-amino-acid polypeptide reads, in one-letter code: Mannose-1-phosphate guanylyltransferase catalytic subunit beta (360 aa).

Residues 2–222 (KALILVGGYG…QGFWMDIGQP (221 aa)) form a substrate-binding domain region. D110 serves as a coordination point for GDP-alpha-D-mannose. Residue D110 coordinates Mg(2+). Residue K162 is part of the active site. D218 serves as a coordination point for GDP-alpha-D-mannose. D218 contacts Mg(2+). The interval 245 to 360 (RAGPGFLGNV…DSVPEPRIIM (116 aa)) is hexapeptide repeat domain.

The protein belongs to the transferase hexapeptide repeat family. Component of the GMPPA-GMPPB mannose-1-phosphate guanylyltransferase complex composed of 4 gmppa subunits and 8 gmppb subunits; the complex is organized into three layers, a central layer made up of 2 gmppa dimers sandwiched between two layers each made up of 2 gmppb dimers. Catalytic activity of gmppb is reduced when part of the complex and binding of GDP-alpha-D-Mannose by gmppa induces allosteric feedback inhibition of gmppb. It depends on Mg(2+) as a cofactor.

The enzyme catalyses alpha-D-mannose 1-phosphate + GTP + H(+) = GDP-alpha-D-mannose + diphosphate. Its pathway is nucleotide-sugar biosynthesis; GDP-alpha-D-mannose biosynthesis; GDP-alpha-D-mannose from alpha-D-mannose 1-phosphate (GTP route): step 1/1. Enzyme activity is reduced by incorporation into the GMPPA-GMPPB mannose-1-phosphate guanylyltransferase complex. Allosterically inhibited, when part of the GMPPA-GMPPB complex, by GDP-alpha-D-mannose binding to GMPPA. Catalytic subunit of the GMPPA-GMPPB mannose-1-phosphate guanylyltransferase complex. Catalyzes the formation of GDP-mannose, an essential precursor of glycan moieties of glycoproteins and glycolipids. Can catalyze the reverse reaction in vitro. Together with GMPPA regulates GDP-alpha-D-mannose levels. The polypeptide is Mannose-1-phosphate guanylyltransferase catalytic subunit beta (gmppb) (Danio rerio (Zebrafish)).